Consider the following 464-residue polypeptide: Mitogen-activated protein kinase 10 (464 aa).

The Protein kinase domain maps to 64–359; that stretch reads YQNLKPIGSG…VDDALQHPYI (296 aa). Residues 70 to 78 and lysine 93 each bind ATP; that span reads IGSGAQGIV. The active-site Proton acceptor is the aspartate 189. The residue at position 221 (threonine 221) is a Phosphothreonine; by MAP2K7. Residues 221–223 carry the TXY motif; that stretch reads TPY. Residue tyrosine 223 is modified to Phosphotyrosine; by MAP2K4. Residues 405–464 form a disordered region; the sequence is TKNGVVKGQPSPSGAAVNSSESLPPSSSVNDISSMSTDQTLASDTDSSLEASAGPLGCCR. Residues 423 to 432 are compositionally biased toward low complexity; it reads SSESLPPSSS. Positions 433–454 are enriched in polar residues; that stretch reads VNDISSMSTDQTLASDTDSSLE. 2 S-palmitoyl cysteine lipidation sites follow: cysteine 462 and cysteine 463.

The protein belongs to the protein kinase superfamily. CMGC Ser/Thr protein kinase family. MAP kinase subfamily. Interacts with MAPK8IP1/JIP-1 and MAPK8IP3/JIP-3/JSAP1. Interacts with SPAG9/MAPK8IP4/JIP4. Interacts with HDAC9 and MAPKBP1. Interacts with ARRB2; the interaction enhances MAPK10 activation by MAP3K5. Interacts with SARM1. Interacts with JUND; interaction is inhibited in the presence of MEN1. Requires Mg(2+) as cofactor. In terms of processing, dually phosphorylated on Thr-221 and Tyr-223 by MAP2K4 and MAP2K7, which activates the enzyme. MAP2K7 shows a strong preference for Thr-221 while MAP2K4 phosphorylates Tyr-223 preferentially. Weakly autophosphorylated on threonine and tyrosine residues in vitro. Palmitoylation regulates subcellular location and axonal development.

The protein resides in the cytoplasm. It is found in the membrane. Its subcellular location is the nucleus. The protein localises to the mitochondrion. The catalysed reaction is L-seryl-[protein] + ATP = O-phospho-L-seryl-[protein] + ADP + H(+). It carries out the reaction L-threonyl-[protein] + ATP = O-phospho-L-threonyl-[protein] + ADP + H(+). With respect to regulation, activated by threonine and tyrosine phosphorylation by two dual specificity kinases, MAP2K4 and MAP2K7. MAP2K7 phosphorylates MAPK10 on Thr-221 causing a conformational change and a large increase in Vmax for the enzyme. MAP2K4 then phosphorylates Tyr-223 resulting in a further increase in Vmax. Inhibited by dual specificity phosphatases, such as DUSP1. Inhibited by HDAC9. In terms of biological role, serine/threonine-protein kinase involved in various processes such as neuronal proliferation, differentiation, migration and programmed cell death. Extracellular stimuli such as pro-inflammatory cytokines or physical stress stimulate the stress-activated protein kinase/c-Jun N-terminal kinase (SAP/JNK) signaling pathway. In this cascade, two dual specificity kinases MAP2K4/MKK4 and MAP2K7/MKK7 phosphorylate and activate MAPK10/JNK3. In turn, MAPK10/JNK3 phosphorylates a number of transcription factors, primarily components of AP-1 such as JUN and ATF2 and thus regulates AP-1 transcriptional activity. Plays regulatory roles in the signaling pathways during neuronal apoptosis. Phosphorylates the neuronal microtubule regulator STMN2. Acts in the regulation of the amyloid-beta precursor protein/APP signaling during neuronal differentiation by phosphorylating APP. Also participates in neurite growth in spiral ganglion neurons. Phosphorylates the CLOCK-BMAL1 heterodimer and plays a role in the photic regulation of the circadian clock. Phosphorylates JUND and this phosphorylation is inhibited in the presence of MEN1. The sequence is that of Mitogen-activated protein kinase 10 (Mapk10) from Rattus norvegicus (Rat).